The sequence spans 508 residues: Photosystem II CP47 reaction center protein (508 aa).

The next 6 helical transmembrane spans lie at A21 to S36, I101 to W115, G140 to F156, I203 to S218, V237 to V252, and T457 to R472.

The protein belongs to the PsbB/PsbC family. PsbB subfamily. As to quaternary structure, PSII is composed of 1 copy each of membrane proteins PsbA, PsbB, PsbC, PsbD, PsbE, PsbF, PsbH, PsbI, PsbJ, PsbK, PsbL, PsbM, PsbT, PsbX, PsbY, PsbZ, Psb30/Ycf12, at least 3 peripheral proteins of the oxygen-evolving complex and a large number of cofactors. It forms dimeric complexes. Requires Binds multiple chlorophylls. PSII binds additional chlorophylls, carotenoids and specific lipids. as cofactor.

It is found in the plastid. The protein localises to the chloroplast thylakoid membrane. One of the components of the core complex of photosystem II (PSII). It binds chlorophyll and helps catalyze the primary light-induced photochemical processes of PSII. PSII is a light-driven water:plastoquinone oxidoreductase, using light energy to abstract electrons from H(2)O, generating O(2) and a proton gradient subsequently used for ATP formation. The polypeptide is Photosystem II CP47 reaction center protein (Cryptomeria japonica (Japanese cedar)).